Here is a 517-residue protein sequence, read N- to C-terminus: Keratin-associated protein 16-1 (517 aa).

Repeat copies occupy residues 73-77, 93-97, 128-132, 153-157, 168-172, 198-202, 208-212, 228-232, 248-252, 283-287, and 303-307. An 11 X 5 AA repeats of C-C-X(3) region spans residues 73 to 307; the sequence is CCDPVICEPS…CQEPSCCVSS (235 aa). The interval 483–517 is disordered; that stretch reads VSEEAPCQPTEAKPISPTTREAAAAQPAASKPANC. The segment covering 504-517 has biased composition (low complexity); that stretch reads AAAAQPAASKPANC.

This sequence belongs to the KRTAP type 16 family.

The polypeptide is Keratin-associated protein 16-1 (KRTAP16-1) (Homo sapiens (Human)).